The sequence spans 268 residues: Helix-loop-helix protein 6 (268 aa).

Over residues 117 to 130 the composition is skewed to low complexity; sequence QSQVQPQLPTQSQP. Positions 117 to 140 are disordered; sequence QSQVQPQLPTQSQPKPSSKASLDT. Positions 131–140 are enriched in polar residues; it reads KPSSKASLDT. The region spanning 173 to 225 is the bHLH domain; sequence SSVWKRNERERCRVRNVNDGYERLRKHLPVHFDEKRISKVDTLRLAIRYIKHL.

As to expression, expressed in the gland cells of the pharynx and weakly in the pharyngeal neuron.

The protein resides in the nucleus. Its function is as follows. Transcription factor that regulates the development of the g2 pharyngeal gland cells and pharyngeal gland function and thereby is required for feeding. Required for the expression of a number of genes in the pharyngeal gland, possibly by binding to the E box motif (5'-CANNTG-3') in the promoter region of these genes. Positively regulates the expression of genes encoding mucin-like proteins, which lubricate the pharyngeal tract to ensure efficient passage of the bacterial food source. Exhibits pharyngeal gland-specific positive autoregulation activity. This Caenorhabditis elegans protein is Helix-loop-helix protein 6 (hlh-6).